The sequence spans 636 residues: Chaperone protein DnaK (636 aa).

Thr-198 carries the phosphothreonine; by autocatalysis modification. The disordered stretch occupies residues 598 to 636; that stretch reads YAAKEQPGEHGETGSGEQARKESGKDENVVDADFEEVKK. The segment covering 603 to 625 has biased composition (basic and acidic residues); sequence QPGEHGETGSGEQARKESGKDEN. A compositionally biased stretch (acidic residues) spans 626-636; the sequence is VVDADFEEVKK.

The protein belongs to the heat shock protein 70 family.

Functionally, acts as a chaperone. The protein is Chaperone protein DnaK of Pelobacter propionicus (strain DSM 2379 / NBRC 103807 / OttBd1).